The chain runs to 501 residues: Lysine--tRNA ligase (501 aa).

Positions 411 and 418 each coordinate Mg(2+).

The protein belongs to the class-II aminoacyl-tRNA synthetase family. As to quaternary structure, homodimer. It depends on Mg(2+) as a cofactor.

The protein resides in the cytoplasm. It catalyses the reaction tRNA(Lys) + L-lysine + ATP = L-lysyl-tRNA(Lys) + AMP + diphosphate. The protein is Lysine--tRNA ligase of Clostridium perfringens (strain SM101 / Type A).